The sequence spans 631 residues: Glutamyl-tRNA(Gln) amidotransferase subunit E (631 aa).

The protein belongs to the GatB/GatE family. GatE subfamily. In terms of assembly, heterodimer of GatD and GatE.

The enzyme catalyses L-glutamyl-tRNA(Gln) + L-glutamine + ATP + H2O = L-glutaminyl-tRNA(Gln) + L-glutamate + ADP + phosphate + H(+). Functionally, allows the formation of correctly charged Gln-tRNA(Gln) through the transamidation of misacylated Glu-tRNA(Gln) in organisms which lack glutaminyl-tRNA synthetase. The reaction takes place in the presence of glutamine and ATP through an activated gamma-phospho-Glu-tRNA(Gln). The GatDE system is specific for glutamate and does not act on aspartate. The chain is Glutamyl-tRNA(Gln) amidotransferase subunit E from Methanococcus maripaludis (strain C5 / ATCC BAA-1333).